The following is a 591-amino-acid chain: Beta-fructofuranosidase, insoluble isoenzyme CWINV4 (591 aa).

Positions 1-22 (MAISNVISVLLLLLVLINLSNQ) are cleaved as a signal peptide. Residues 61-64 (WIND), glutamine 80, tryptophan 88, and 123-124 (WS) each bind substrate. Aspartate 64 is an active-site residue. Asparagine 145 and asparagine 182 each carry an N-linked (GlcNAc...) asparagine glycan. Residues 187 to 188 (RD), glutamate 242, and aspartate 276 each bind substrate. Residues asparagine 336, asparagine 472, and asparagine 565 are each glycosylated (N-linked (GlcNAc...) asparagine). A disulfide bridge links cysteine 436 with cysteine 484.

The protein belongs to the glycosyl hydrolase 32 family. Expressed in flowers, and seeds, and, to a lower extent, in seedlings.

The protein resides in the secreted. The protein localises to the extracellular space. It is found in the apoplast. It localises to the cell wall. The enzyme catalyses Hydrolysis of terminal non-reducing beta-D-fructofuranoside residues in beta-D-fructofuranosides.. The chain is Beta-fructofuranosidase, insoluble isoenzyme CWINV4 (CWINV4) from Arabidopsis thaliana (Mouse-ear cress).